We begin with the raw amino-acid sequence, 179 residues long: ATP synthase subunit delta (179 aa).

It belongs to the ATPase delta chain family. In terms of assembly, F-type ATPases have 2 components, F(1) - the catalytic core - and F(0) - the membrane proton channel. F(1) has five subunits: alpha(3), beta(3), gamma(1), delta(1), epsilon(1). F(0) has three main subunits: a(1), b(2) and c(10-14). The alpha and beta chains form an alternating ring which encloses part of the gamma chain. F(1) is attached to F(0) by a central stalk formed by the gamma and epsilon chains, while a peripheral stalk is formed by the delta and b chains.

The protein resides in the cell inner membrane. Its function is as follows. F(1)F(0) ATP synthase produces ATP from ADP in the presence of a proton or sodium gradient. F-type ATPases consist of two structural domains, F(1) containing the extramembraneous catalytic core and F(0) containing the membrane proton channel, linked together by a central stalk and a peripheral stalk. During catalysis, ATP synthesis in the catalytic domain of F(1) is coupled via a rotary mechanism of the central stalk subunits to proton translocation. Functionally, this protein is part of the stalk that links CF(0) to CF(1). It either transmits conformational changes from CF(0) to CF(1) or is implicated in proton conduction. The protein is ATP synthase subunit delta of Burkholderia multivorans (strain ATCC 17616 / 249).